A 179-amino-acid chain; its full sequence is Methylated-DNA--protein-cysteine methyltransferase, inducible (179 aa).

The Nucleophile; methyl group acceptor role is filled by Cys-141.

This sequence belongs to the MGMT family.

The catalysed reaction is a 6-O-methyl-2'-deoxyguanosine in DNA + L-cysteinyl-[protein] = S-methyl-L-cysteinyl-[protein] + a 2'-deoxyguanosine in DNA. It catalyses the reaction a 4-O-methyl-thymidine in DNA + L-cysteinyl-[protein] = a thymidine in DNA + S-methyl-L-cysteinyl-[protein]. Functionally, involved in the cellular defense against the biological effects of O6-methylguanine (O6-MeG) and O4-methylthymine (O4-MeT) in DNA. Repairs the methylated nucleobase in DNA by stoichiometrically transferring the methyl group to a cysteine residue in the enzyme. This is a suicide reaction: the enzyme is irreversibly inactivated. The protein is Methylated-DNA--protein-cysteine methyltransferase, inducible (adaB) of Bacillus subtilis (strain 168).